Reading from the N-terminus, the 649-residue chain is Arylsulfatase (649 aa).

An N-terminal signal peptide occupies residues 1 to 22 (MLQRLVVALCLLGFAALTAAAA). Ca(2+)-binding residues include Asp-34 and Asp-35. A glycan (N-linked (GlcNAc...) asparagine) is linked at Asn-41. Cys-72 serves as a coordination point for Ca(2+). Cys-72 serves as the catalytic Nucleophile. Cys-72 carries the 3-oxoalanine (Cys) modification. 3 N-linked (GlcNAc...) asparagine glycosylation sites follow: Asn-89, Asn-224, and Asn-279. Ca(2+) contacts are provided by Asp-324 and Asn-325. N-linked (GlcNAc...) asparagine glycans are attached at residues Asn-445, Asn-489, and Asn-531.

The protein belongs to the sulfatase family. It depends on Ca(2+) as a cofactor. Post-translationally, the conversion to 3-oxoalanine (also known as C-formylglycine, FGly), of a serine or cysteine residue in prokaryotes and of a cysteine residue in eukaryotes, is critical for catalytic activity.

The protein resides in the periplasm. It catalyses the reaction an aryl sulfate + H2O = a phenol + sulfate + H(+). With respect to regulation, inhibited by Na(3)BO(3) and KCN. No inhibition by sodium dodecyl sulfate, even at high concentration. Functionally, is commonly produced by soil microorganisms and plays an important role in the mineralization of sulfates. The polypeptide is Arylsulfatase (Volvox carteri (Green alga)).